We begin with the raw amino-acid sequence, 416 residues long: MSLAKASLWTAASTLVKIGAGLLVGKLLAVSFGPAGLGLAANFRQLITVLGVLAGAGIFNGVTKYVAQYHDNPQQLRRVVGTSSAMVLGFSTLMALVFVLAAAPISQGLFGNTDYQGLVRLVALVQMGIAWGNLLLALMKGFRDAAGNALSLIVGSLIGVLAYYVSYRLGGYEGALLGLALIPALVVIPAAIMLIKRGVIPLSYLKPSWDNGLAGQLSKFTLMALITSVTLPVAYIMMRKLLAAQYSWDEVGIWQGVSSISDAYLQFITASFSVYLLPTLSRLTEKRDITREVVKSLKFVLPAVAAASFTVWLLRDFAIWLLLSNKFTAMRDLFAWQLVGDVLKVGAYVFGYLVIAKASLRFYILAEVSQFTLLMVFAHWLIPAHGALGAAQAYMATYIVYFSLCCGVFLLWRRRA.

At 1 to 17 (MSLAKASLWTAASTLVK) the chain is on the cytoplasmic side. Residues 18–38 (IGAGLLVGKLLAVSFGPAGLG) traverse the membrane as a helical segment. Topologically, residues 39–45 (LAANFRQ) are periplasmic. A helical membrane pass occupies residues 46 to 66 (LITVLGVLAGAGIFNGVTKYV). Topologically, residues 67–84 (AQYHDNPQQLRRVVGTSS) are cytoplasmic. A helical transmembrane segment spans residues 85-105 (AMVLGFSTLMALVFVLAAAPI). Residues 106–121 (SQGLFGNTDYQGLVRL) are Periplasmic-facing. A helical membrane pass occupies residues 122 to 142 (VALVQMGIAWGNLLLALMKGF). Topologically, residues 143 to 144 (RD) are cytoplasmic. A helical transmembrane segment spans residues 145–165 (AAGNALSLIVGSLIGVLAYYV). The Periplasmic segment spans residues 166–174 (SYRLGGYEG). A helical transmembrane segment spans residues 175–195 (ALLGLALIPALVVIPAAIMLI). The Cytoplasmic segment spans residues 196–216 (KRGVIPLSYLKPSWDNGLAGQ). A helical transmembrane segment spans residues 217–237 (LSKFTLMALITSVTLPVAYIM). The Periplasmic segment spans residues 238-259 (MRKLLAAQYSWDEVGIWQGVSS). A helical membrane pass occupies residues 260 to 280 (ISDAYLQFITASFSVYLLPTL). Topologically, residues 281-302 (SRLTEKRDITREVVKSLKFVLP) are cytoplasmic. A helical membrane pass occupies residues 303–323 (AVAAASFTVWLLRDFAIWLLL). Residues 324-334 (SNKFTAMRDLF) lie on the Periplasmic side of the membrane. A helical membrane pass occupies residues 335–355 (AWQLVGDVLKVGAYVFGYLVI). Over 356-370 (AKASLRFYILAEVSQ) the chain is Cytoplasmic. 2 helical membrane-spanning segments follow: residues 371–391 (FTLLMVFAHWLIPAHGALGAA) and 392–412 (QAYMATYIVYFSLCCGVFLLW). Residues 413-416 (RRRA) lie on the Cytoplasmic side of the membrane.

Belongs to the polysaccharide transport (PST) (TC 2.A.66.2) family. In terms of assembly, probably part of a complex composed of WzxE, WzyE and WzzE.

The protein resides in the cell inner membrane. The protein operates within bacterial outer membrane biogenesis; enterobacterial common antigen biosynthesis. Functionally, mediates the transbilayer movement of Und-PP-GlcNAc-ManNAcA-Fuc4NAc (lipid III) from the inner to the outer leaflet of the cytoplasmic membrane during the assembly of enterobacterial common antigen (ECA). Required for the assembly of the phosphoglyceride-linked form of ECA (ECA(PG)) and the water-soluble cyclic form of ECA (ECA(CYC)). Could also mediate the translocation of Und-PP-GlcNAc. In Escherichia coli (strain K12), this protein is Lipid III flippase.